The sequence spans 288 residues: Fibroblast growth factor 2 (288 aa).

The interval 1 to 133 (MVGVGGGDVE…RGSRPGPAGT (133 aa)) is disordered. The propeptide at 1 to 142 (MVGVGGGDVE…TMAAGSITTL (142 aa)) is or 93, or 124, or 125, or 131, or 161. Low complexity predominate over residues 52–64 (SVNPRSRAAGSPR). The segment covering 68–84 (RRTEERPSGSRLGDRGR) has biased composition (basic and acidic residues). 3 positions are modified to omega-N-methylarginine; alternate: R108, R110, and R112. Symmetric dimethylarginine; alternate occurs at positions 108, 110, and 112. A compositionally biased stretch (low complexity) spans 113–132 (GTAAPRAAPAARGSRPGPAG). Heparin is bound at residue N169. The short motif at 179 to 181 (DGR) is the Cell attachment site; atypical element. Y215 is modified (phosphotyrosine; by TEC). The short motif at 221-223 (DGR) is the Cell attachment site; atypical element. Residue K228 forms a Glycyl lysine isopeptide (Lys-Gly) (interchain with G-Cter in SUMO1) linkage. Residues 261–277 (KRTGQYKLGSKTGPGQK) are heparin-binding.

Belongs to the heparin-binding growth factors family. In terms of assembly, monomer. Homodimer. Interacts with FGFR1, FGFR2, FGFR3 and FGFR4. Affinity between fibroblast growth factors (FGFs) and their receptors is increased by heparan sulfate glycosaminoglycans that function as coreceptors. Interacts with CSPG4, FGFBP1 and TEC. Found in a complex with FGFBP1, FGF1 and FGF2. Interacts with FGFBP3. Interacts with integrin ITGAV:ITGB3; the interaction is required for FGF2 signaling. Interacts with SNORC (via the extracellular domain). Interacts with glypican GPC3. In terms of processing, phosphorylation at Tyr-215 regulates FGF2 unconventional secretion. Several N-termini starting at positions 94, 125, 126, 132, 143 and 162 have been identified by direct sequencing. In terms of tissue distribution, expressed in granulosa and cumulus cells. Expressed in hepatocellular carcinoma cells, but not in non-cancerous liver tissue.

The protein localises to the secreted. It is found in the nucleus. In terms of biological role, acts as a ligand for FGFR1, FGFR2, FGFR3 and FGFR4. Also acts as an integrin ligand which is required for FGF2 signaling. Binds to integrin ITGAV:ITGB3. Plays an important role in the regulation of cell survival, cell division, cell differentiation and cell migration. Functions as a potent mitogen in vitro. Can induce angiogenesis. Mediates phosphorylation of ERK1/2 and thereby promotes retinal lens fiber differentiation. This is Fibroblast growth factor 2 (FGF2) from Homo sapiens (Human).